The following is a 239-amino-acid chain: Mediator of RNA polymerase II transcription subunit 7 (239 aa).

Disordered regions lie at residues 1–21 and 43–66; these read MSSLPQEAALPITNTLFPPPP and LFVNDEKGKTKGKEKKSDDRDMSV. Over residues 46-66 the composition is skewed to basic and acidic residues; that stretch reads NDEKGKTKGKEKKSDDRDMSV.

The protein belongs to the Mediator complex subunit 7 family. As to quaternary structure, component of the Mediator complex.

Its subcellular location is the nucleus. Functionally, component of the Mediator complex, a coactivator involved in the regulated transcription of nearly all RNA polymerase II-dependent genes. Mediator functions as a bridge to convey information from gene-specific regulatory proteins to the basal RNA polymerase II transcription machinery. Mediator is recruited to promoters by direct interactions with regulatory proteins and serves as a scaffold for the assembly of a functional preinitiation complex with RNA polymerase II and the general transcription factors. The protein is Mediator of RNA polymerase II transcription subunit 7 (MED7) of Cryptococcus neoformans var. neoformans serotype D (strain B-3501A) (Filobasidiella neoformans).